The primary structure comprises 266 residues: Cytosolic Fe-S cluster assembly factor Nubp2 homolog (266 aa).

Residue 14–21 (GKGGVGKS) participates in ATP binding. The [4Fe-4S] cluster site is built by cysteine 188 and cysteine 191.

The protein belongs to the Mrp/NBP35 ATP-binding proteins family. Nubp2/CFD1 subfamily. Heterotetramer of 2 Nubp1 and 2 Nubp2 chains. [4Fe-4S] cluster is required as a cofactor.

Its subcellular location is the cytoplasm. Functionally, component of the cytosolic iron-sulfur (Fe/S) protein assembly (CIA) machinery. Required for maturation of extramitochondrial Fe-S proteins. The Nubp1-Nubp2 heterotetramer forms a Fe-S scaffold complex, mediating the de novo assembly of an Fe-S cluster and its transfer to target apoproteins. This Drosophila virilis (Fruit fly) protein is Cytosolic Fe-S cluster assembly factor Nubp2 homolog.